The following is a 158-amino-acid chain: Ecotin-like protein 2 (158 aa).

This sequence belongs to the protease inhibitor I11 (ecotin) family.

In Leishmania major, this protein is Ecotin-like protein 2.